The following is a 436-amino-acid chain: Anhydro-N-acetylmuramic acid kinase (436 aa).

Position 32–39 (32–39 (GTSLDGMD)) interacts with ATP.

It belongs to the anhydro-N-acetylmuramic acid kinase family.

It carries out the reaction 1,6-anhydro-N-acetyl-beta-muramate + ATP + H2O = N-acetyl-D-muramate 6-phosphate + ADP + H(+). It functions in the pathway amino-sugar metabolism; 1,6-anhydro-N-acetylmuramate degradation. Its pathway is cell wall biogenesis; peptidoglycan recycling. Its function is as follows. Catalyzes the specific phosphorylation of 1,6-anhydro-N-acetylmuramic acid (anhMurNAc) with the simultaneous cleavage of the 1,6-anhydro ring, generating MurNAc-6-P. Is required for the utilization of anhMurNAc either imported from the medium or derived from its own cell wall murein, and thus plays a role in cell wall recycling. The chain is Anhydro-N-acetylmuramic acid kinase from Psychrobacter arcticus (strain DSM 17307 / VKM B-2377 / 273-4).